The following is a 208-amino-acid chain: MTGSLFIITAASGTGKTSLVKQLLATTNDLTVSVSHTTRDPRPGEIDGHHYHFTDVDNFVTAISESQFLEHAEVFGNYYGTSEQSVRAQLDAGVDVILEIDWQGALQVKKIFTDAIMIFILPPSIATLRQRLSTRGQDSMEVIEQRLAGAVNEMAQYINFDYVIINDNFEVALTELKAIIVADRQTLKRQQQRYQRTITNLLSNIVDK.

The region spanning 3–181 (GSLFIITAAS…ALTELKAIIV (179 aa)) is the Guanylate kinase-like domain. Residue 10-17 (AASGTGKT) coordinates ATP.

The protein belongs to the guanylate kinase family.

The protein localises to the cytoplasm. It catalyses the reaction GMP + ATP = GDP + ADP. Functionally, essential for recycling GMP and indirectly, cGMP. The polypeptide is Guanylate kinase (Psychrobacter arcticus (strain DSM 17307 / VKM B-2377 / 273-4)).